An 843-amino-acid polypeptide reads, in one-letter code: Translation initiation factor IF-2 (843 aa).

Residues 94–259 (QRSPEEIEAE…AHGFQSPTGP (166 aa)) form a disordered region. Over residues 96-135 (SPEEIEAERKREMDERRAVENAARQKAEEEAKRRAEEDAR) the composition is skewed to basic and acidic residues. A compositionally biased stretch (low complexity) spans 136–177 (NQPAAGQPASAPAQPVAAAEPVREAPAPAAAAPAPASAAPSA). Composition is skewed to basic and acidic residues over residues 178–219 (DARK…EKAP) and 227–236 (TTDEESDSFR). The segment covering 237–250 (RGGRGKSRLKKRNA) has biased composition (basic residues). One can recognise a tr-type G domain in the interval 343 to 512 (SRAPVVTVMG…LLQAEVLELK (170 aa)). Residues 352-359 (GHVDHGKT) form a G1 region. 352-359 (GHVDHGKT) provides a ligand contact to GTP. A G2 region spans residues 377–381 (GITQH). The segment at 398 to 401 (DTPG) is G3. GTP contacts are provided by residues 398–402 (DTPGH) and 452–455 (NKID). The tract at residues 452 to 455 (NKID) is G4. Residues 488-490 (SAK) are G5.

Belongs to the TRAFAC class translation factor GTPase superfamily. Classic translation factor GTPase family. IF-2 subfamily.

The protein resides in the cytoplasm. Functionally, one of the essential components for the initiation of protein synthesis. Protects formylmethionyl-tRNA from spontaneous hydrolysis and promotes its binding to the 30S ribosomal subunits. Also involved in the hydrolysis of GTP during the formation of the 70S ribosomal complex. The chain is Translation initiation factor IF-2 from Pseudomonas savastanoi pv. phaseolicola (strain 1448A / Race 6) (Pseudomonas syringae pv. phaseolicola (strain 1448A / Race 6)).